The chain runs to 89 residues: Small ribosomal subunit protein uS15 (89 aa).

A compositionally biased stretch (basic and acidic residues) spans 1–10; the sequence is MSLDTTEKQE. A disordered region spans residues 1–23; it reads MSLDTTEKQELINAHQTHATDTG. A compositionally biased stretch (polar residues) spans 14 to 23; it reads AHQTHATDTG.

Belongs to the universal ribosomal protein uS15 family. Part of the 30S ribosomal subunit. Forms a bridge to the 50S subunit in the 70S ribosome, contacting the 23S rRNA.

In terms of biological role, one of the primary rRNA binding proteins, it binds directly to 16S rRNA where it helps nucleate assembly of the platform of the 30S subunit by binding and bridging several RNA helices of the 16S rRNA. Functionally, forms an intersubunit bridge (bridge B4) with the 23S rRNA of the 50S subunit in the ribosome. The protein is Small ribosomal subunit protein uS15 of Synechococcus sp. (strain WH7803).